The chain runs to 318 residues: NADH-ubiquinone oxidoreductase chain 1 (318 aa).

8 helical membrane-spanning segments follow: residues 2 to 22 (FMVN…FLTL), 71 to 91 (YIIA…PLPI), 98 to 118 (INLG…SILW), 146 to 166 (LAII…STLI), 171 to 191 (HTWL…STLA), 222 to 242 (LFFM…ATIF), 253 to 273 (EFFS…FLWV), and 294 to 314 (LPLT…LANI).

This sequence belongs to the complex I subunit 1 family.

It is found in the mitochondrion inner membrane. The enzyme catalyses a ubiquinone + NADH + 5 H(+)(in) = a ubiquinol + NAD(+) + 4 H(+)(out). Core subunit of the mitochondrial membrane respiratory chain NADH dehydrogenase (Complex I) that is believed to belong to the minimal assembly required for catalysis. Complex I functions in the transfer of electrons from NADH to the respiratory chain. The immediate electron acceptor for the enzyme is believed to be ubiquinone. In Nycticebus coucang (Slow loris), this protein is NADH-ubiquinone oxidoreductase chain 1 (MT-ND1).